The primary structure comprises 85 residues: MKKILFSMFYSILVGEEPDSVFLKKEGKQNQVKMIWIAPSSCAKDLTISEGTGATFPFHFHSRVSICFHALFLRPRNMKWTNSFS.

The protein belongs to the ycf76 family.

The protein resides in the plastid. It localises to the chloroplast. This is an uncharacterized protein from Zea mays (Maize).